The sequence spans 125 residues: Large ribosomal subunit protein mL51 (125 aa).

A mitochondrion-targeting transit peptide spans 1–29; it reads MWSVQQLLWGCRSLLTQGCRSFSLGSRDL.

Belongs to the mitochondrion-specific ribosomal protein mL51 family. Component of the mitochondrial ribosome large subunit (39S) which comprises a 16S rRNA and about 50 distinct proteins.

The protein localises to the mitochondrion. The chain is Large ribosomal subunit protein mL51 (mrpl51) from Xenopus tropicalis (Western clawed frog).